We begin with the raw amino-acid sequence, 861 residues long: DNA topoisomerase 1 (861 aa).

Residues 3-141 form the Toprim domain; it reads KSLVIVESPA…KFSRVVFNEI (139 aa). The Mg(2+) site is built by Glu-9 and Asp-110. A Topo IA-type catalytic domain is found at 157–572; it reads NMNRVHAQQA…DFFKKFSEQL (416 aa). The tract at residues 191–196 is interaction with DNA; sequence SAGRVQ. Tyr-318 acts as the O-(5'-phospho-DNA)-tyrosine intermediate in catalysis. 3 consecutive C4-type zinc fingers follow at residues 596-628, 658-685, and 707-732; these read CPIC…KKRC, CDIC…NPSC, and CEKC…NKIC.

Belongs to the type IA topoisomerase family. As to quaternary structure, monomer. Requires Mg(2+) as cofactor.

It catalyses the reaction ATP-independent breakage of single-stranded DNA, followed by passage and rejoining.. Functionally, releases the supercoiling and torsional tension of DNA, which is introduced during the DNA replication and transcription, by transiently cleaving and rejoining one strand of the DNA duplex. Introduces a single-strand break via transesterification at a target site in duplex DNA. The scissile phosphodiester is attacked by the catalytic tyrosine of the enzyme, resulting in the formation of a DNA-(5'-phosphotyrosyl)-enzyme intermediate and the expulsion of a 3'-OH DNA strand. The free DNA strand then undergoes passage around the unbroken strand, thus removing DNA supercoils. Finally, in the religation step, the DNA 3'-OH attacks the covalent intermediate to expel the active-site tyrosine and restore the DNA phosphodiester backbone. This Buchnera aphidicola subsp. Acyrthosiphon pisum (strain APS) (Acyrthosiphon pisum symbiotic bacterium) protein is DNA topoisomerase 1.